The chain runs to 462 residues: Cell wall mannoprotein 1 (462 aa).

The first 18 residues, 1 to 18, serve as a signal peptide directing secretion; sequence MKFLSSLVVLGLSAQALA. Residue S313 coordinates hexadecanoate. The disordered stretch occupies residues 346–429; the sequence is FAGTGPAPTT…SVPAAPTGGN (84 aa). Positions 347-366 are enriched in low complexity; the sequence is AGTGPAPTTSSTPEASTAPA. Over residues 399–420 the composition is skewed to polar residues; it reads VWPTSTTASPDVQPTITSSGTS.

It belongs to the cell wall mannoprotein 1 family. As to quaternary structure, monomer. In terms of processing, mannoprotein, glycosylated.

It is found in the secreted. It localises to the cell wall. Its function is as follows. Constitutive protein of the cell wall. Binds fatty acids and may thus serve as a fatty acid transporter between P.marneffei and host cells during infection. Abundant antigen target of host humoral immune response. The polypeptide is Cell wall mannoprotein 1 (Talaromyces marneffei (Penicillium marneffei)).